The sequence spans 282 residues: Pantothenate synthetase (282 aa).

An ATP-binding site is contributed by 30-37 (MGYLHEGH). His37 acts as the Proton donor in catalysis. Gln61 is a binding site for (R)-pantoate. A beta-alanine-binding site is contributed by Gln61. 147 to 150 (GMKD) contributes to the ATP binding site. A (R)-pantoate-binding site is contributed by Gln153. ATP is bound by residues Val176 and 184-187 (KSSR).

It belongs to the pantothenate synthetase family. In terms of assembly, homodimer.

The protein resides in the cytoplasm. The catalysed reaction is (R)-pantoate + beta-alanine + ATP = (R)-pantothenate + AMP + diphosphate + H(+). The protein operates within cofactor biosynthesis; (R)-pantothenate biosynthesis; (R)-pantothenate from (R)-pantoate and beta-alanine: step 1/1. Functionally, catalyzes the condensation of pantoate with beta-alanine in an ATP-dependent reaction via a pantoyl-adenylate intermediate. The chain is Pantothenate synthetase from Bacillus cereus (strain G9842).